The primary structure comprises 1091 residues: Methionine S-methyltransferase (1091 aa).

It belongs to the class I-like SAM-binding methyltransferase superfamily. In terms of assembly, homotetramer.

The protein resides in the cytoplasm. It catalyses the reaction L-methionine + S-adenosyl-L-methionine = S-methyl-L-methionine + S-adenosyl-L-homocysteine. Functionally, catalyzes the S-methylmethionine (SMM) biosynthesis from adenosyl-L-homocysteine (AdoMet) and methionine. SMM biosynthesis (by MMT1) and degradation (by HMT-1, HMT-2 and HMT-3) constitute the SMM cycle in plants, which is probably required to achieve short term control of AdoMet level. Also able to catalyze the selenium-methylmethionine (SeMM) from AdoMet and selenium-methionine (SeMet). May play a role in phoem sulfur transport; such function is however not essential. The protein is Methionine S-methyltransferase (MMT1) of Zea mays (Maize).